The primary structure comprises 270 residues: Diaminopimelate epimerase (270 aa).

3 residues coordinate substrate: N15, Q49, and N66. C75 (proton donor) is an active-site residue. Substrate contacts are provided by residues 76 to 77 (GN), N155, N187, and 204 to 205 (ER). Residue C213 is the Proton acceptor of the active site. 214 to 215 (GS) contributes to the substrate binding site.

It belongs to the diaminopimelate epimerase family. As to quaternary structure, homodimer.

The protein localises to the cytoplasm. The catalysed reaction is (2S,6S)-2,6-diaminopimelate = meso-2,6-diaminopimelate. It participates in amino-acid biosynthesis; L-lysine biosynthesis via DAP pathway; DL-2,6-diaminopimelate from LL-2,6-diaminopimelate: step 1/1. Catalyzes the stereoinversion of LL-2,6-diaminopimelate (L,L-DAP) to meso-diaminopimelate (meso-DAP), a precursor of L-lysine and an essential component of the bacterial peptidoglycan. In Rickettsia massiliae (strain Mtu5), this protein is Diaminopimelate epimerase.